We begin with the raw amino-acid sequence, 373 residues long: Chemerin-like receptor 1 (373 aa).

Over 1–41 (MRMEDEDYNTSISYGDEYPDYLDSIVVLEDLSPLEARVTRI) the chain is Extracellular. The N-linked (GlcNAc...) asparagine glycan is linked to asparagine 9. A helical membrane pass occupies residues 42–64 (FLVVVYSIVCFLGILGNGLVIII). At 65-75 (ATFKMKKTVNM) the chain is on the cytoplasmic side. Residues 76–97 (VWFLNLAVADFLFNVFLPIHIT) form a helical membrane-spanning segment. Residues 98 to 114 (YAAMDYHWVFGTAMCKI) lie on the Extracellular side of the membrane. Cysteine 112 and cysteine 189 are oxidised to a cystine. Residues 115 to 135 (SNFLLIHNMFTSVFLLTIISS) form a helical membrane-spanning segment. Over 136–154 (DRCISVLLPVWSQNHRSVR) the chain is Cytoplasmic. A helical membrane pass occupies residues 155–176 (LAYMACMVIWVLAFFLSSPSLV). Topologically, residues 177-224 (FRDTANLHGKISCFNNFSLSTPGSSSWPTHSQMDPVGYSRHMVVTVTR) are extracellular. Asparagine 192 is a glycosylation site (N-linked (GlcNAc...) asparagine). Residues 225–245 (FLCGFLVPVLIITACYLTIVC) traverse the membrane as a helical segment. The Cytoplasmic portion of the chain corresponds to 246-261 (KLQRNRLAKTKKPFKI). The helical transmembrane segment at 262–282 (IVTIIITFFLCWCPYHTLNLL) threads the bilayer. The Extracellular segment spans residues 283-300 (ELHHTAMPGSVFSLGLPL). A helical transmembrane segment spans residues 301-320 (ATALAIANSCMNPILYVFMG). The Cytoplasmic segment spans residues 321–373 (QDFKKFKVALFSRLVNALSEDTGHSSYPSHRSFTKMSSMNERTSMNERETGML). Serine 339 is subject to Phosphoserine. The tract at residues 341–373 (DTGHSSYPSHRSFTKMSSMNERTSMNERETGML) is disordered. Position 342 is a phosphothreonine (threonine 342). Over residues 344–363 (HSSYPSHRSFTKMSSMNERT) the composition is skewed to polar residues. A phosphoserine mark is found at serine 349, serine 352, and serine 358. Residues 364–373 (SMNERETGML) are compositionally biased toward basic and acidic residues.

Belongs to the chemokine-like receptor (CMKLR) family. As to expression, prominently expressed in developing osseous and cartilaginous tissue. Also found in adult parathyroid glands. Expressed in cardiovascular system, brain, kidney, gastrointestinal tissues and myeloid tissues. Expressed in a broad array of tissues associated with hematopoietic and immune function including, spleen, thymus, appendix, lymph node, bone marrow and fetal liver. Among leukocyte populations abundant expression in monocyte-derived macrophage and immature dendritic cells (DCs). High expression in blood monocytes and low levels in polymorphonuclear cells and T-cells. Expressed on endothelial cells. Highly expressed in differentiating adipocytes.

It is found in the cell membrane. Its function is as follows. Receptor for the chemoattractant adipokine chemerin/RARRES2 and for the omega-3 fatty acid derived molecule resolvin E1. Interaction with RARRES2 initiates activation of G proteins G(i)/G(o) and beta-arrestin pathways inducing cellular responses via second messenger pathways such as intracellular calcium mobilization, phosphorylation of MAP kinases MAPK1/MAPK3 (ERK1/2), TYRO3, MAPK14/P38MAPK and PI3K leading to multifunctional effects, like reduction of immune responses, enhancing of adipogenesis and angionesis. Resolvin E1 down-regulates cytokine production in macrophages by reducing the activation of MAPK1/3 (ERK1/2) and NF-kappa-B. Positively regulates adipogenesis and adipocyte metabolism. (Microbial infection) Acts as a coreceptor for several SIV strains (SIVMAC316, SIVMAC239, SIVMACL7E-FR and SIVSM62A), as well as a primary HIV-1 strain (92UG024-2). The sequence is that of Chemerin-like receptor 1 from Homo sapiens (Human).